Reading from the N-terminus, the 668-residue chain is Metal reductase (668 aa).

FMN contacts are provided by residues 23–25 (PMH), G57, Q98, R216, R290, and 312–313 (AR). 2 residues coordinate [4Fe-4S] cluster: C336 and C339. Q341 contributes to the FAD binding site. Positions 343 and 355 each coordinate [4Fe-4S] cluster. The FAD site is built by A386, E405, Q413, R423, and A450.

The protein in the N-terminal section; belongs to the NADH:flavin oxidoreductase/NADH oxidase family. As to quaternary structure, homotetramer. The cofactor is FMN. Requires FAD as cofactor. It depends on [4Fe-4S] cluster as a cofactor.

Its subcellular location is the cytoplasm. Its function is as follows. Metal reductase able to reduce Fe(III)-chelates to Fe(II)-chelates, as well as soluble Cr(VI) and U(VI), using NADH as electron donor. Cannot use NADPH as an electron donor. Is unable to reduce riboflavin and FMN with NADH as electron donor. May have an in vivo role in metal reduction in D.reducens, which is an organism capable of reducing contaminant heavy metals and radionuclides. This is Metal reductase from Desulforamulus reducens (strain ATCC BAA-1160 / DSM 100696 / MI-1) (Desulfotomaculum reducens).